Consider the following 263-residue polypeptide: Acyl-[acyl-carrier-protein]--UDP-N-acetylglucosamine O-acyltransferase (263 aa).

This sequence belongs to the transferase hexapeptide repeat family. LpxA subfamily. In terms of assembly, homotrimer.

It is found in the cytoplasm. It catalyses the reaction a (3R)-hydroxyacyl-[ACP] + UDP-N-acetyl-alpha-D-glucosamine = a UDP-3-O-[(3R)-3-hydroxyacyl]-N-acetyl-alpha-D-glucosamine + holo-[ACP]. It functions in the pathway glycolipid biosynthesis; lipid IV(A) biosynthesis; lipid IV(A) from (3R)-3-hydroxytetradecanoyl-[acyl-carrier-protein] and UDP-N-acetyl-alpha-D-glucosamine: step 1/6. Functionally, involved in the biosynthesis of lipid A, a phosphorylated glycolipid that anchors the lipopolysaccharide to the outer membrane of the cell. This Stenotrophomonas maltophilia (strain R551-3) protein is Acyl-[acyl-carrier-protein]--UDP-N-acetylglucosamine O-acyltransferase.